The primary structure comprises 575 residues: Isocitrate dehydrogenase kinase/phosphatase (575 aa).

Residues 315–321 and Lys336 contribute to the ATP site; that span reads APGIRGM. Asp371 is an active-site residue.

It belongs to the AceK family.

The protein localises to the cytoplasm. It catalyses the reaction L-seryl-[isocitrate dehydrogenase] + ATP = O-phospho-L-seryl-[isocitrate dehydrogenase] + ADP + H(+). In terms of biological role, bifunctional enzyme which can phosphorylate or dephosphorylate isocitrate dehydrogenase (IDH) on a specific serine residue. This is a regulatory mechanism which enables bacteria to bypass the Krebs cycle via the glyoxylate shunt in response to the source of carbon. When bacteria are grown on glucose, IDH is fully active and unphosphorylated, but when grown on acetate or ethanol, the activity of IDH declines drastically concomitant with its phosphorylation. The sequence is that of Isocitrate dehydrogenase kinase/phosphatase from Citrobacter koseri (strain ATCC BAA-895 / CDC 4225-83 / SGSC4696).